Consider the following 78-residue polypeptide: Major outer membrane lipoprotein Lpp (78 aa).

The N-terminal stretch at 1–20 (MNRTKLVLGAVILASTMLAG) is a signal peptide. Cys21 carries N-palmitoyl cysteine lipidation. Cys21 is lipidated: S-diacylglycerol cysteine. Repeats lie at residues 24 to 34 (NAKIDQLSSDV) and 38 to 48 (NAKVDQLSNDV). The stretch at 27–75 (IDQLSSDVQTLNAKVDQLSNDVNAVRADVQAAKDDAARANQRLDNQAQA) forms a coiled coil. N6-murein peptidoglycan lysine is present on Lys78.

It belongs to the Lpp family. As to quaternary structure, homotrimer.

The protein localises to the cell outer membrane. It is found in the secreted. Its subcellular location is the cell wall. A highly abundant outer membrane lipoprotein that controls the distance between the inner and outer membranes. The only protein known to be covalently linked to the peptidoglycan network (PGN). Also non-covalently binds the PGN. The link between the cell outer membrane and PGN contributes to maintenance of the structural and functional integrity of the cell envelope, and maintains the correct distance between the PGN and the outer membrane. This is Major outer membrane lipoprotein Lpp from Yersinia pestis.